A 107-amino-acid chain; its full sequence is Iron-binding protein IscA (107 aa).

Fe cation contacts are provided by cysteine 35, cysteine 99, and cysteine 101.

The protein belongs to the HesB/IscA family. Homodimer; may form tetramers and higher multimers. Fe cation is required as a cofactor.

In terms of biological role, is able to transfer iron-sulfur clusters to apo-ferredoxin. Multiple cycles of [2Fe2S] cluster formation and transfer are observed, suggesting that IscA acts catalytically. Recruits intracellular free iron so as to provide iron for the assembly of transient iron-sulfur cluster in IscU in the presence of IscS, L-cysteine and the thioredoxin reductase system TrxA/TrxB. This is Iron-binding protein IscA from Yersinia pestis bv. Antiqua (strain Angola).